An 801-amino-acid polypeptide reads, in one-letter code: Cadherin-20 (801 aa).

An N-terminal signal peptide occupies residues methionine 1–serine 34. Residues serine 35 to arginine 59 constitute a propeptide that is removed on maturation. Residues serine 60 to arginine 619 lie on the Extracellular side of the membrane. Cadherin domains lie at tryptophan 61–phenylalanine 165, leucine 166–phenylalanine 274, proline 275–phenylalanine 389, glutamate 390–phenylalanine 494, and phenylalanine 494–alanine 610. An N-linked (GlcNAc...) asparagine glycan is attached at asparagine 261. N-linked (GlcNAc...) asparagine glycans are attached at residues asparagine 420, asparagine 461, and asparagine 542. A helical membrane pass occupies residues glycine 620–leucine 640. Over serine 641–tryptophan 801 the chain is Cytoplasmic.

The protein resides in the cell membrane. Cadherins are calcium-dependent cell adhesion proteins. They preferentially interact with themselves in a homophilic manner in connecting cells; cadherins may thus contribute to the sorting of heterogeneous cell types. This is Cadherin-20 (Cdh20) from Rattus norvegicus (Rat).